Here is a 567-residue protein sequence, read N- to C-terminus: Restriction of telomere capping protein 5 (567 aa).

The region spanning 289–515 is the TLDc domain; sequence KVMTPALLAQ…IQDVEVWGCG (227 aa).

The protein belongs to the RTC5 family.

The protein localises to the cytoplasm. In terms of biological role, may be involved in a process influencing telomere capping. The polypeptide is Restriction of telomere capping protein 5 (RTC5) (Saccharomyces cerevisiae (strain YJM789) (Baker's yeast)).